The chain runs to 256 residues: Probable ATP-dependent transporter slr0075 (256 aa).

Positions 6–250 (LSIKNLTASV…EEKGYDFLDE (245 aa)) constitute an ABC transporter domain. An ATP-binding site is contributed by 38–45 (GRNGSGKS).

This sequence belongs to the ABC transporter superfamily. Ycf16 family.

This is Probable ATP-dependent transporter slr0075 from Synechocystis sp. (strain ATCC 27184 / PCC 6803 / Kazusa).